The following is a 184-amino-acid chain: Interferon alpha-2 (184 aa).

Residues 1–23 form the signal peptide; it reads MALPFSLLMALVVLSCHSSCSLG. 2 cysteine pairs are disulfide-bonded: Cys-24/Cys-122 and Cys-52/Cys-162.

The protein belongs to the alpha/beta interferon family. As to quaternary structure, interacts with IFNAR2.

It is found in the secreted. In terms of biological role, produced by macrophages, IFN-alpha have antiviral activities. The polypeptide is Interferon alpha-2 (Equus caballus (Horse)).